A 217-amino-acid chain; its full sequence is Thiamine-phosphate synthase (217 aa).

4-amino-2-methyl-5-(diphosphooxymethyl)pyrimidine-binding positions include 39–43 and Asn71; that span reads QLRRK. Residues Asp72 and Asp91 each coordinate Mg(2+). Ser110 lines the 4-amino-2-methyl-5-(diphosphooxymethyl)pyrimidine pocket. 137–139 contributes to the 2-[(2R,5Z)-2-carboxy-4-methylthiazol-5(2H)-ylidene]ethyl phosphate binding site; it reads SPT. Lys140 provides a ligand contact to 4-amino-2-methyl-5-(diphosphooxymethyl)pyrimidine. 2-[(2R,5Z)-2-carboxy-4-methylthiazol-5(2H)-ylidene]ethyl phosphate-binding positions include Gly173 and 193–194; that span reads IS.

Belongs to the thiamine-phosphate synthase family. Mg(2+) is required as a cofactor.

It catalyses the reaction 2-[(2R,5Z)-2-carboxy-4-methylthiazol-5(2H)-ylidene]ethyl phosphate + 4-amino-2-methyl-5-(diphosphooxymethyl)pyrimidine + 2 H(+) = thiamine phosphate + CO2 + diphosphate. It carries out the reaction 2-(2-carboxy-4-methylthiazol-5-yl)ethyl phosphate + 4-amino-2-methyl-5-(diphosphooxymethyl)pyrimidine + 2 H(+) = thiamine phosphate + CO2 + diphosphate. The catalysed reaction is 4-methyl-5-(2-phosphooxyethyl)-thiazole + 4-amino-2-methyl-5-(diphosphooxymethyl)pyrimidine + H(+) = thiamine phosphate + diphosphate. It participates in cofactor biosynthesis; thiamine diphosphate biosynthesis; thiamine phosphate from 4-amino-2-methyl-5-diphosphomethylpyrimidine and 4-methyl-5-(2-phosphoethyl)-thiazole: step 1/1. Condenses 4-methyl-5-(beta-hydroxyethyl)thiazole monophosphate (THZ-P) and 2-methyl-4-amino-5-hydroxymethyl pyrimidine pyrophosphate (HMP-PP) to form thiamine monophosphate (TMP). The chain is Thiamine-phosphate synthase from Bordetella bronchiseptica (strain ATCC BAA-588 / NCTC 13252 / RB50) (Alcaligenes bronchisepticus).